The primary structure comprises 305 residues: Glycine--tRNA ligase alpha subunit (305 aa).

The protein belongs to the class-II aminoacyl-tRNA synthetase family. Tetramer of two alpha and two beta subunits.

It localises to the cytoplasm. The enzyme catalyses tRNA(Gly) + glycine + ATP = glycyl-tRNA(Gly) + AMP + diphosphate. This chain is Glycine--tRNA ligase alpha subunit (glyQ), found in Vibrio cholerae serotype O1 (strain ATCC 39315 / El Tor Inaba N16961).